The sequence spans 210 residues: Large ribosomal subunit protein uL3 (210 aa).

The disordered stretch occupies residues 125–151 (RHGQSRGPMSHGSRYHRRPGSMGPVAP).

Belongs to the universal ribosomal protein uL3 family. In terms of assembly, part of the 50S ribosomal subunit. Forms a cluster with proteins L14 and L19.

Its function is as follows. One of the primary rRNA binding proteins, it binds directly near the 3'-end of the 23S rRNA, where it nucleates assembly of the 50S subunit. The sequence is that of Large ribosomal subunit protein uL3 from Bacillus mycoides (strain KBAB4) (Bacillus weihenstephanensis).